Consider the following 1181-residue polypeptide: MGKLIRMGTQERRLLRPKRLHWSRLLFFLGMLIIGSTYQHLRRPQNPPSMWTKVSSQQPIKLAIRDLPNDEITVTDKDPPEASSEVEGEMLAPQDTVIIGEAAPSIAMEDTPNPPITTKITPTSLKNNYSPTTAGTRRQKENIPPTPSRAPSHFISTSGRQRVKSYTPKPRGGRKSSSPTHTREEGRMHTPSPAGAPRTISPTSTEKDSETTATYRMLEPRSERTAGKTSLKRMVPNTRTFLTREVETDLVTSPSLVGKNTLGSPRRGERNSSTTPLRAVLQPTPATSEEQVTASIRMGSTPATTEGSTAAQRIGNPLSGTSTPAVRIASVTDREKRPSTAHGTLVTPQVKAVLTTQVHRCVVVKPAPAVPMTPSPSMTAILFPEAPTSGPSALPPGWPNLHPKAEYPPDLFSVEDRRQGWVVLHIFGMTYVFVALAIVCDEYFVPALGVITDKLQISEDVAGATFMAAGGSAPELFTSLIGVFISHSNVGIGTIVGSAVFNILFVIGTCALFSREILNLTWWPLFRDVSFYILDLSMLIVFFLDSLIAWWESLLLLLAYALYVFTMKWNKQIERWVKEQLSRRPVAKVMALGDLSKPSDGAIEENEQQDNKKLKLPSVLTRGSSSASLHNSIIRSTIYHLMLHSLDPLGEARPSKDKQESLNQEARVLPQTKAESSSDEEEPAELPAVTVTPAPAPEDKGDQEEDPGCQEDVDEAEHRGDMTGEEGERETEAEGKKDEEGETEAERKEDGQEEETETKGKEKQEGETESEGKDEQEGETEAEGKEADHEGETEAEGKEVEHEGETEAEGTEDEQEGETEAEGKEVEQEGETEAEGKEVEHEVETEAERKETNHEGETEAEGKEADHEGETEAEGNVEHQGETEAEGKVEHEGETEAGEKDEHEGQSETQADDTEVKDGEGEAEANAEDQCETAQGEKGADGGGGSDGGDSEEEEDEEDEEEEEEEEEEEEEEESEEPLSLEWPESRQKQAIYLFLLPIVFPLWLTIPDVRRQEARKFFVITFLGSIIWIAMFSYLMVWWAHQVGETIGISEEIMGLTILAAGTSIPDLITSVIVARKGLGDMAVSSSVGSNIFDITVGLPVPWLLFSLINALQPIPVSSNGLFCAIVLLFLMLLFVIFSIASCKWRMNKILGFTMFLLYFVFLVISVMLEDRIISCPVSV.

Residues 1–419 (MGKLIRMGTQ…DLFSVEDRRQ (419 aa)) lie on the Extracellular side of the membrane. Disordered regions lie at residues 107 to 232 (AMED…TSLK), 255 to 276 (SLVG…STTP), and 300 to 323 (STPA…GTST). Positions 124-136 (SLKNNYSPTTAGT) are enriched in polar residues. N271 carries an N-linked (GlcNAc...) asparagine glycan. A compositionally biased stretch (polar residues) spans 301-311 (TPATTEGSTAA). Residues 420–440 (GWVVLHIFGMTYVFVALAIVC) traverse the membrane as a helical segment. At 441-464 (DEYFVPALGVITDKLQISEDVAGA) the chain is on the cytoplasmic side. One copy of the Alpha-1 repeat lies at 461-501 (VAGATFMAAGGSAPELFTSLIGVFISHSNVGIGTIVGSAVF). Residues 465-485 (TFMAAGGSAPELFTSLIGVFI) traverse the membrane as a helical segment. Over 486-491 (SHSNVG) the chain is Extracellular. A helical transmembrane segment spans residues 492 to 512 (IGTIVGSAVFNILFVIGTCAL). Topologically, residues 513-519 (FSREILN) are cytoplasmic. Residues 520–544 (LTWWPLFRDVSFYILDLSMLIVFFL) form a helical membrane-spanning segment. Over 545–552 (DSLIAWWE) the chain is Extracellular. The chain crosses the membrane as a helical span at residues 553–569 (SLLLLLAYALYVFTMKW). Topologically, residues 570 to 989 (NKQIERWVKE…SLEWPESRQK (420 aa)) are cytoplasmic. A disordered region spans residues 598–617 (PSDGAIEENEQQDNKKLKLP). S625 is modified (phosphoserine). A disordered region spans residues 650–983 (GEARPSKDKQ…ESEEPLSLEW (334 aa)). T690 carries the post-translational modification Phosphothreonine. Acidic residues predominate over residues 701–715 (GDQEEDPGCQEDVDE). A run of 14 repeats spans residues 730–741 (ETEAEGKKDEEG), 742–754 (ETEA…GQEE), 755–766 (ETETKGKEKQEG), 767–778 (ETESEGKDEQEG), 779–791 (ETEA…DHEG), 792–804 (ETEA…EHEG), 805–817 (ETEA…EQEG), 818–830 (ETEA…EQEG), 831–843 (ETEA…EHEV), 844–856 (ETEA…NHEG), 857–869 (ETEA…DHEG), 870–881 (ETEAEGNVEHQG), 882–893 (ETEAEGKVEHEG), and 894–905 (ETEAGEKDEHEG). 3 stretches are compositionally biased toward basic and acidic residues: residues 730 to 750 (ETEA…RKED), 757 to 775 (ETKG…GKDE), and 782 to 805 (AEGK…HEGE). The segment at 730 to 905 (ETEAEGKKDE…EAGEKDEHEG (176 aa)) is 14 X approximate tandem repeats. Over residues 806–820 (TEAEGTEDEQEGETE) the composition is skewed to acidic residues. A compositionally biased stretch (basic and acidic residues) spans 834 to 906 (AEGKEVEHEV…AGEKDEHEGQ (73 aa)). Acidic residues-rich tracts occupy residues 921–931 (GEAEANAEDQC) and 949–979 (GDSE…EEPL). Residues 990 to 1010 (QAIYLFLLPIVFPLWLTIPDV) form a helical membrane-spanning segment. Residues 1011–1017 (RRQEARK) lie on the Extracellular side of the membrane. Residues 1018–1038 (FFVITFLGSIIWIAMFSYLMV) traverse the membrane as a helical segment. The Cytoplasmic portion of the chain corresponds to 1039 to 1053 (WWAHQVGETIGISEE). Residues 1054 to 1074 (IMGLTILAAGTSIPDLITSVI) traverse the membrane as a helical segment. An Alpha-2 repeat occupies 1061–1092 (AAGTSIPDLITSVIVARKGLGDMAVSSSVGSN). Over 1075 to 1092 (VARKGLGDMAVSSSVGSN) the chain is Extracellular. A helical transmembrane segment spans residues 1093-1113 (IFDITVGLPVPWLLFSLINAL). Residues 1114–1121 (QPIPVSSN) are Cytoplasmic-facing. The chain crosses the membrane as a helical span at residues 1122–1142 (GLFCAIVLLFLMLLFVIFSIA). The Extracellular segment spans residues 1143–1150 (SCKWRMNK). The chain crosses the membrane as a helical span at residues 1151 to 1171 (ILGFTMFLLYFVFLVISVMLE). At 1172–1181 (DRIISCPVSV) the chain is on the cytoplasmic side.

It belongs to the Ca(2+):cation antiporter (CaCA) (TC 2.A.19) family. SLC24A subfamily. The uncleaved signal sequence is required for efficient membrane targeting and proper membrane integration and topology. As to expression, highly expressed in the eye.

Its subcellular location is the cell membrane. It catalyses the reaction Ca(2+)(out) + K(+)(out) + 4 Na(+)(in) = Ca(2+)(in) + K(+)(in) + 4 Na(+)(out). Calcium, potassium:sodium antiporter that transports 1 Ca(2+) and 1 K(+) in exchange for 4 Na(+). Critical component of the visual transduction cascade, controlling the calcium concentration of outer segments during light and darkness. Light causes a rapid lowering of cytosolic free calcium in the outer segment of both retinal rod and cone photoreceptors and the light-induced lowering of calcium is caused by extrusion via this protein which plays a key role in the process of light adaptation. This Rattus norvegicus (Rat) protein is Sodium/potassium/calcium exchanger 1 (Slc24a1).